Here is a 114-residue protein sequence, read N- to C-terminus: Lectin MVL (114 aa).

Copy 1 of the repeat occupies 2 to 55 (ASYKVNIPAGPLWSNAEAQQVGPKIAAAHQGNFTGQWTTVVESAMSVVEVELQV). A carbohydrate is bound by residues 12–16 (PLWSN), Gln20, and 36–44 (GQWTTVVES). The linker stretch occupies residues 56–60 (ENTGI). The stretch at 61–114 (HEFKTDVLAGPLWSNDEAQKLGPQIAASYGAEFTGQWRTIVEGVMSVIQIKYTF) is repeat 2. A carbohydrate is bound by residues 71–75 (PLWSN), Gln79, and 95–103 (GQWRTIVEG).

As to quaternary structure, homodimer.

The protein localises to the cytoplasm. In terms of biological role, carbohydrate-binding protein that binds oligomannosides such as Man(6)GlcNAc(2) with sub-micromolar affinities. The specificity of MVL is unique in that its minimal target comprises the Man-alpha-(1-&gt;6)-Man-beta-(1-&gt;4)-GlcNAc-beta-(1-&gt;4)-GlcNAc tetrasaccharide core (Man(2)A) found in N-linked oligomannosides. Displays hemagglutininating activity on rabbit, horse and hen erythrocytes. This activity is inhibited by yeast mannan. Does not bind mono- and disaccharides. Inhibits HIV-1 envelope-mediated cell fusion at nanomolar concentrations through carbohydrate-mediated interactions with high-mannose residues on the surface of the HIV envelope glycoprotein gp120. Its function is as follows. Unexpectedly for a lectin, one of the 2 oligomannose binding sites of MVL can catalyze the cleavage of chitin fragments (such as chitotriose, i.e. GlcNAc(3) or GlcNAc-beta-(1-&gt;4)-GlcNAcbeta-(1-&gt;4)-GlcNAc, and chitotetraose, i.e. GlcNAc(4)) to GlcNAc. This weak beta-1,4-glycosidase activity is restricted to the C-terminal carbohydrate-binding site. Does not cleave Man(3)GlcNAc(2) or the tetrasaccharide Man(2)A. In Microcystis viridis (Polycystis viridis), this protein is Lectin MVL (mvl).